The chain runs to 33 residues: Glutaminase-asparaginase (33 aa).

One can recognise an Asparaginase/glutaminase domain in the interval 1–33 (NVVVLATGGTIAGAGTNAFASQXGPLGMVVEGK). Thr-10 functions as the Acyl-ester intermediate in the catalytic mechanism.

The protein belongs to the asparaginase 1 family. As to quaternary structure, homotetramer.

Its subcellular location is the periplasm. The enzyme catalyses L-glutamine + H2O = L-glutamate + NH4(+). The catalysed reaction is L-asparagine + H2O = L-aspartate + NH4(+). In Delftia acidovorans (Pseudomonas acidovorans), this protein is Glutaminase-asparaginase (ansB).